Reading from the N-terminus, the 2209-residue chain is Genome polyprotein (2209 aa).

A lipid anchor (N-myristoyl glycine; by host) is attached at G2. Residues G2–Q1520 lie on the Cytoplasmic side of the membrane. The interval G580–A600 is amphipathic alpha-helix. The interval A599–E619 is disordered. Active-site for protease 2A activity residues include H901 and D919. Zn(2+) is bound by residues C936 and C938. The active-site For protease 2A activity is C990. Residues C996 and H998 each coordinate Zn(2+). A membrane-binding region spans residues G1128–Q1200. An oligomerization region spans residues G1128–T1266. The segment at S1149–S1153 is RNA-binding. In terms of domain architecture, SF3 helicase spans E1232 to N1388. Residue G1256–S1263 coordinates ATP. Residues C1396, C1399, C1408, and C1413 each coordinate Zn(2+). The segment at C1396–C1413 adopts a C4-type zinc-finger fold. The interval E1440 to I1447 is RNA-binding. Residues M1451–Q1456 are oligomerization. An intramembrane segment occupies A1521 to Y1536. Over K1537–F2209 the chain is Cytoplasmic. At Y1546 the chain carries O-(5'-phospho-RNA)-tyrosine. Y1546 is subject to O-UMP-tyrosine; transient. The region spanning G1566–F1744 is the Peptidase C3 domain. Residues H1605, E1636, and C1712 each act as for protease 3C activity in the active site. The RdRp catalytic domain maps to E1975 to L2090. Positions 1981 and 2076 each coordinate Mg(2+).

The protein belongs to the picornaviruses polyprotein family. Interacts with capsid protein VP1 and capsid protein VP3 to form heterotrimeric protomers. As to quaternary structure, interacts with capsid protein VP0, and capsid protein VP3 to form heterotrimeric protomers. Five protomers subsequently associate to form pentamers which serve as building blocks for the capsid. Interacts with capsid protein VP2, capsid protein VP3 and capsid protein VP4 following cleavage of capsid protein VP0. Interacts with human PVR. In terms of assembly, interacts with capsid protein VP1 and capsid protein VP3 in the mature capsid. Interacts with capsid protein VP0 and capsid protein VP1 to form heterotrimeric protomers. Five protomers subsequently associate to form pentamers which serve as building blocks for the capsid. Interacts with capsid protein VP4 in the mature capsid. Interacts with protein 2C; this interaction may be important for virion morphogenesis. As to quaternary structure, interacts with capsid protein VP1 and capsid protein VP3. In terms of assembly, homodimer. Homohexamer; forms a hexameric ring structure with 6-fold symmetry characteristic of AAA+ ATPases. Interacts (via N-terminus) with host RTN3 (via reticulon domain); this interaction is important for viral replication. Interacts with capsid protein VP3; this interaction may be important for virion morphogenesis. As to quaternary structure, interacts with protein 3CD. In terms of assembly, homodimer. Interacts with host GBF1. Interacts (via GOLD domain) with host ACBD3 (via GOLD domain); this interaction allows the formation of a viral protein 3A/ACBD3 heterotetramer with a 2:2 stoichiometry, which will stimulate the recruitment of host PI4KB in order to synthesize PI4P at the viral RNA replication sites. Interacts with RNA-directed RNA polymerase. As to quaternary structure, interacts with protein 3AB and with RNA-directed RNA polymerase. In terms of assembly, interacts with Viral protein genome-linked and with protein 3CD. Mg(2+) is required as a cofactor. Specific enzymatic cleavages in vivo by the viral proteases yield processing intermediates and the mature proteins. Post-translationally, myristoylation is required for the formation of pentamers during virus assembly. Further assembly of 12 pentamers and a molecule of genomic RNA generates the provirion. In terms of processing, during virion maturation, immature virions are rendered infectious following cleavage of VP0 into VP4 and VP2. This maturation seems to be an autocatalytic event triggered by the presence of RNA in the capsid and it is followed by a conformational change infectious virion. Myristoylation is required during RNA encapsidation and formation of the mature virus particle. Post-translationally, VPg is uridylylated by the polymerase into VPg-pUpU. This acts as a nucleotide-peptide primer for the genomic RNA replication.

The protein localises to the virion. Its subcellular location is the host cytoplasm. It is found in the host cytoplasmic vesicle membrane. It localises to the host nucleus. The enzyme catalyses RNA(n) + a ribonucleoside 5'-triphosphate = RNA(n+1) + diphosphate. It catalyses the reaction Selective cleavage of Tyr-|-Gly bond in the picornavirus polyprotein.. The catalysed reaction is a ribonucleoside 5'-triphosphate + H2O = a ribonucleoside 5'-diphosphate + phosphate + H(+). It carries out the reaction Selective cleavage of Gln-|-Gly bond in the poliovirus polyprotein. In other picornavirus reactions Glu may be substituted for Gln, and Ser or Thr for Gly.. Its activity is regulated as follows. Replication or transcription is subject to high level of random mutations by the nucleotide analog ribavirin. Its function is as follows. Forms an icosahedral capsid of pseudo T=3 symmetry with capsid proteins VP2 and VP3. The capsid is 300 Angstroms in diameter, composed of 60 copies of each capsid protein and enclosing the viral positive strand RNA genome. Capsid protein VP1 mainly forms the vertices of the capsid. Capsid protein VP1 interacts with host cell receptor PVR to provide virion attachment to target host epithelial cells. This attachment induces virion internalization predominantly through clathrin- and caveolin-independent endocytosis in Hela cells and through caveolin-mediated endocytosis in brain microvascular endothelial cells. Tyrosine kinases are probably involved in the entry process. Virus binding to PVR induces increased junctional permeability and rearrangement of junctional proteins. Modulation of endothelial tight junctions, as well as cytolytic infection of endothelial cells themselves, may result in loss of endothelial integrity which may help the virus to reach the CNS. After binding to its receptor, the capsid undergoes conformational changes. Capsid protein VP1 N-terminus (that contains an amphipathic alpha-helix) and capsid protein VP4 are externalized. Together, they shape a pore in the host membrane through which viral genome is translocated to host cell cytoplasm. In terms of biological role, forms an icosahedral capsid of pseudo T=3 symmetry with capsid proteins VP1 and VP3. The capsid is 300 Angstroms in diameter, composed of 60 copies of each capsid protein and enclosing the viral positive strand RNA genome. Forms an icosahedral capsid of pseudo T=3 symmetry with capsid proteins VP2 and VP1. The capsid is 300 Angstroms in diameter, composed of 60 copies of each capsid protein and enclosing the viral positive strand RNA genome. Functionally, lies on the inner surface of the capsid shell. After binding to the host receptor, the capsid undergoes conformational changes. Capsid protein VP4 is released, Capsid protein VP1 N-terminus is externalized, and together, they shape a pore in the host membrane through which the viral genome is translocated into the host cell cytoplasm. Its function is as follows. Component of immature procapsids, which is cleaved into capsid proteins VP4 and VP2 after maturation. Allows the capsid to remain inactive before the maturation step. In terms of biological role, cysteine protease that cleaves viral polyprotein and specific host proteins. It is responsible for the autocatalytic cleavage between the P1 and P2 regions, which is the first cleavage occurring in the polyprotein. Also cleaves the host translation initiation factor EIF4G1, in order to shut down the capped cellular mRNA translation. Inhibits the host nucleus-cytoplasm protein and RNA trafficking by cleaving host members of the nuclear pores including NUP98, NUP62 and NUP153. Counteracts stress granule formation probably by antagonizing its assembly or promoting its dissassembly. Cleaves and inhibits host IFIH1/MDA5, thereby inhibiting the type-I IFN production and the establishment of the antiviral state. Cleaves and inhibits host MAVS, thereby inhibiting the type-I IFN production and the establishment of the antiviral state. Plays an essential role in the virus replication cycle by acting as a viroporin. Creates a pore in the host endoplasmic reticulum and as a consequence releases Ca2+ in the cytoplasm of infected cell. In turn, high levels of cytoplasmic calcium may trigger membrane trafficking and transport of viral ER-associated proteins to viroplasms, sites of viral genome replication. Functionally, induces and associates with structural rearrangements of intracellular membranes. Displays RNA-binding, nucleotide binding and NTPase activities. May play a role in virion morphogenesis and viral RNA encapsidation by interacting with the capsid protein VP3. Its function is as follows. Localizes the viral replication complex to the surface of membranous vesicles. Together with protein 3CD binds the Cis-Active RNA Element (CRE) which is involved in RNA synthesis initiation. Acts as a cofactor to stimulate the activity of 3D polymerase, maybe through a nucleid acid chaperone activity. In terms of biological role, localizes the viral replication complex to the surface of membranous vesicles. It inhibits host cell endoplasmic reticulum-to-Golgi apparatus transport and causes the disassembly of the Golgi complex, possibly through GBF1 interaction. This would result in depletion of MHC, trail receptors and IFN receptors at the host cell surface. Plays an essential role in viral RNA replication by recruiting ACBD3 and PI4KB at the viral replication sites, thereby allowing the formation of the rearranged membranous structures where viral replication takes place. Acts as a primer for viral RNA replication and remains covalently bound to viral genomic RNA. VPg is uridylylated prior to priming replication into VPg-pUpU. The oriI viral genomic sequence may act as a template for this. The VPg-pUpU is then used as primer on the genomic RNA poly(A) by the RNA-dependent RNA polymerase to replicate the viral genome. During genome replication, the VPg-RNA linkage is removed by the host TDP2, thereby accelerating replication. During the late stage of the replication cycle, host TDP2 is excluded from sites of viral RNA synthesis and encapsidation, allowing for the generation of progeny virions. Functionally, involved in the viral replication complex and viral polypeptide maturation. It exhibits protease activity with a specificity and catalytic efficiency that is different from protease 3C. Protein 3CD binds to the 5'UTR of the viral genome. Its function is as follows. Major viral protease that mediates proteolytic processing of the polyprotein. Cleaves host EIF5B, contributing to host translation shutoff. Cleaves also host PABPC1, contributing to host translation shutoff. Cleaves host RIGI and thus contributes to the inhibition of type I interferon production. Cleaves host NLRP1, triggers host N-glycine-mediated degradation of the autoinhibitory NLRP1 N-terminal fragment. Inhibits the integrated stress response (ISR) in the infected cell by cleaving host G3BP1. Stress granule formation is thus inhibited, which allows protein synthesis and viral replication. In terms of biological role, replicates the viral genomic RNA on the surface of intracellular membranes. May form linear arrays of subunits that propagate along a strong head-to-tail interaction called interface-I. Covalently attaches UMP to a tyrosine of VPg, which is used to prime RNA synthesis. The positive stranded RNA genome is first replicated at virus induced membranous vesicles, creating a dsRNA genomic replication form. This dsRNA is then used as template to synthesize positive stranded RNA genomes. ss(+)RNA genomes are either translated, replicated or encapsidated. The sequence is that of Genome polyprotein from Homo sapiens (Human).